A 287-amino-acid chain; its full sequence is ATP synthase subunit a (287 aa).

The next 6 helical transmembrane spans lie at 37 to 57 (LDSVAVSVILGVLGLFVMWLA), 96 to 116 (FIAPLALTVFVWIFLMNAMDL), 149 to 169 (LGLSSAVLILCFVYSIKIKGL), 187 to 207 (PVFALILGVVNLLMQIIEYVA), 224 to 244 (ELVFMLIALMGGAAAMSLSGV), and 266 to 286 (TLQAFIFMMLTLIYLGQAHEA).

This sequence belongs to the ATPase A chain family. In terms of assembly, F-type ATPases have 2 components, CF(1) - the catalytic core - and CF(0) - the membrane proton channel. CF(1) has five subunits: alpha(3), beta(3), gamma(1), delta(1), epsilon(1). CF(0) has three main subunits: a(1), b(2) and c(9-12). The alpha and beta chains form an alternating ring which encloses part of the gamma chain. CF(1) is attached to CF(0) by a central stalk formed by the gamma and epsilon chains, while a peripheral stalk is formed by the delta and b chains.

Its subcellular location is the cell inner membrane. Functionally, key component of the proton channel; it plays a direct role in the translocation of protons across the membrane. In Acidovorax sp. (strain JS42), this protein is ATP synthase subunit a.